Here is a 373-residue protein sequence, read N- to C-terminus: Histidinol-phosphate aminotransferase (373 aa).

Residue K230 is modified to N6-(pyridoxal phosphate)lysine.

It belongs to the class-II pyridoxal-phosphate-dependent aminotransferase family. Histidinol-phosphate aminotransferase subfamily. Homodimer. Pyridoxal 5'-phosphate serves as cofactor.

It carries out the reaction L-histidinol phosphate + 2-oxoglutarate = 3-(imidazol-4-yl)-2-oxopropyl phosphate + L-glutamate. It functions in the pathway amino-acid biosynthesis; L-histidine biosynthesis; L-histidine from 5-phospho-alpha-D-ribose 1-diphosphate: step 7/9. This is Histidinol-phosphate aminotransferase from Synechococcus elongatus (strain ATCC 33912 / PCC 7942 / FACHB-805) (Anacystis nidulans R2).